A 250-amino-acid polypeptide reads, in one-letter code: Low affinity immunoglobulin gamma Fc region receptor III-A (250 aa).

A signal peptide spans 1-20 (MWRLLSPTALLLLVSAGTRA). The Extracellular portion of the chain corresponds to 21–207 (ADLSKAMVVL…TSTFLPHWYQ (187 aa)). Ig-like C2-type domains follow at residues 32–105 (PEWN…LEVH) and 120–189 (EGDT…VNIT). 2 disulfide bridges follow: cysteine 47–cysteine 89 and cysteine 128–cysteine 172. 4 N-linked (GlcNAc...) asparagine glycosylation sites follow: asparagine 63, asparagine 133, asparagine 180, and asparagine 187. The helical transmembrane segment at 208–228 (IAFFLVTALLFVVDTGLHVAV) threads the bilayer. Residues 229-250 (QRDLQSSVKEWKDGKVTWSHGP) are Cytoplasmic-facing.

In terms of assembly, forms a heterooligomeric complex with ITAM-containing signaling subunits FCER1G. Interacts (via transmembrane domain) with signaling subunits; this interaction is a prerequisite for receptor complex expression on the cell surface and intracellular signal transduction. Binds the Fc region of antigen-complexed IgG.

Its subcellular location is the cell membrane. In terms of biological role, receptor for the invariable Fc fragment of immunoglobulin gamma (IgG). Optimally activated upon binding of clustered antigen-IgG complexes displayed on cell surfaces, triggers lysis of antibody-coated cells, a process known as antibody-dependent cellular cytotoxicity (ADCC). Does not bind free monomeric IgG, thus avoiding inappropriate effector cell activation in the absence of antigenic trigger. Mediates IgG effector functions on natural killer (NK) cells. Binds antigen-IgG complexes generated upon infection and triggers NK cell-dependent cytokine production and degranulation to limit viral load and propagation. Fc-binding subunit that associates with FCER1G adapter to form functional signaling complexes. Following the engagement of antigen-IgG complexes, triggers phosphorylation of immunoreceptor tyrosine-based activation motif (ITAM)-containing adapter with subsequent activation of phosphatidylinositol 3-kinase signaling and sustained elevation of intracellular calcium that ultimately drive NK cell activation. Mediates enhanced ADCC in response to afucosylated IgGs. This is Low affinity immunoglobulin gamma Fc region receptor III-A from Felis catus (Cat).